Here is a 304-residue protein sequence, read N- to C-terminus: Probable WRKY transcription factor 13 (304 aa).

Positions 141 to 190 are disordered; sequence QKNNHGSEIDVDDNDDEVGDGGGINDDDNGRHHHHDTPSRHDKHNTASLG. The span at 149–159 shows a compositional bias: acidic residues; sequence IDVDDNDDEVG. The WRKY DNA-binding region spans 217 to 282; sequence SEVDVLDDGY…YEGRHLHSPS (66 aa).

The protein belongs to the WRKY group II-c family.

The protein resides in the nucleus. Its function is as follows. Transcription factor. Interacts specifically with the W box (5'-(T)TGAC[CT]-3'), a frequently occurring elicitor-responsive cis-acting element. In Arabidopsis thaliana (Mouse-ear cress), this protein is Probable WRKY transcription factor 13 (WRKY13).